The following is an 89-amino-acid chain: Large ribosomal subunit protein bL27 (89 aa).

Residues 1–26 (MATKKAGGSSKNGRDSAGRRLGLKKS) form a disordered region.

Belongs to the bacterial ribosomal protein bL27 family.

In Orientia tsutsugamushi (strain Ikeda) (Rickettsia tsutsugamushi), this protein is Large ribosomal subunit protein bL27.